Reading from the N-terminus, the 188-residue chain is Phosphoheptose isomerase (188 aa).

The 156-residue stretch at 33–188 (VTASLRAGGK…CGLVEDALCS (156 aa)) folds into the SIS domain. Position 48–50 (48–50 (NGG)) interacts with substrate. Zn(2+) contacts are provided by histidine 57 and glutamate 61. Residues glutamate 61, 90–91 (ND), 116–118 (STS), serine 121, and glutamine 168 each bind substrate. The Zn(2+) site is built by glutamine 168 and histidine 176.

It belongs to the SIS family. GmhA subfamily. As to quaternary structure, homotetramer. Zn(2+) serves as cofactor.

The protein resides in the cytoplasm. The enzyme catalyses 2 D-sedoheptulose 7-phosphate = D-glycero-alpha-D-manno-heptose 7-phosphate + D-glycero-beta-D-manno-heptose 7-phosphate. It functions in the pathway carbohydrate biosynthesis; D-glycero-D-manno-heptose 7-phosphate biosynthesis; D-glycero-alpha-D-manno-heptose 7-phosphate and D-glycero-beta-D-manno-heptose 7-phosphate from sedoheptulose 7-phosphate: step 1/1. Catalyzes the isomerization of sedoheptulose 7-phosphate in D-glycero-D-manno-heptose 7-phosphate. The polypeptide is Phosphoheptose isomerase (Rhodospirillum rubrum (strain ATCC 11170 / ATH 1.1.1 / DSM 467 / LMG 4362 / NCIMB 8255 / S1)).